The primary structure comprises 87 residues: Keratin-associated protein 7-1 (87 aa).

The interval 43-84 is 11 X 2 AA repeats of G-[YCGS]; that stretch reads GCGCNGYSSLGYSFGGSNINNLGGCYGGSFYRPWGSGSGFGY.

It belongs to the KRTAP type 7 family. Interacts with hair keratins. Expressed in the upper portion of the hair cortex.

In terms of biological role, in the hair cortex, hair keratin intermediate filaments are embedded in an interfilamentous matrix, consisting of hair keratin-associated proteins (KRTAP), which are essential for the formation of a rigid and resistant hair shaft through their extensive disulfide bond cross-linking with abundant cysteine residues of hair keratins. The matrix proteins include the high-sulfur and high-glycine-tyrosine keratins. The chain is Keratin-associated protein 7-1 (KRTAP7-1) from Homo sapiens (Human).